A 112-amino-acid chain; its full sequence is Large ribosomal subunit protein uL22 (112 aa).

This sequence belongs to the universal ribosomal protein uL22 family. Part of the 50S ribosomal subunit.

Functionally, this protein binds specifically to 23S rRNA; its binding is stimulated by other ribosomal proteins, e.g. L4, L17, and L20. It is important during the early stages of 50S assembly. It makes multiple contacts with different domains of the 23S rRNA in the assembled 50S subunit and ribosome. Its function is as follows. The globular domain of the protein is located near the polypeptide exit tunnel on the outside of the subunit, while an extended beta-hairpin is found that lines the wall of the exit tunnel in the center of the 70S ribosome. In Anaplasma phagocytophilum (strain HZ), this protein is Large ribosomal subunit protein uL22.